We begin with the raw amino-acid sequence, 243 residues long: Leucinostatins biosynthesis cluster protein S (243 aa).

Part of the gene cluster that mediates the biosynthesis of the lipopeptide antibiotics leucinostatins that show extensive biological activities, including antimalarial, antiviral, antibacterial, antifungal, and antitumor activities, as well as phytotoxic. The function of lcsS within the leucinostatins biosynthesis has not been identified yet. This is Leucinostatins biosynthesis cluster protein S from Purpureocillium lilacinum (Paecilomyces lilacinus).